The sequence spans 118 residues: MEMKNMVVGLFLIAAFALPALATNFEKDFITHETVQAILKKVGPSSNGMLDEQTISALTGKTIISNPVLEEALLTHSNSINALGGTLPCGESCVWIPCISSVVGCSCKSKVCYKNSLA.

Positions 1–22 (MEMKNMVVGLFLIAAFALPALA) are cleaved as a signal peptide. Positions 23–84 (TNFEKDFITH…THSNSINALG (62 aa)) are excised as a propeptide. A cross-link (cyclopeptide (Gly-Asn)) is located at residues 85–115 (GTLPCGESCVWIPCISSVVGCSCKSKVCYKN). Disulfide bonds link C89-C105, C93-C107, and C98-C112. A propeptide spanning residues 116–118 (SLA) is cleaved from the precursor.

Cycloviolacin-O8 is a cyclic peptide. In terms of tissue distribution, expressed in leaves, petals, petioles and roots but not in runners (at protein level).

In terms of biological role, probably participates in a plant defense mechanism. The polypeptide is Cycloviolacin-O8 (Voc1) (Viola odorata (Sweet violet)).